The primary structure comprises 655 residues: Import motor subunit, mitochondrial (655 aa).

The N-terminal 23 residues, 1–23 (MLAAKNILNRSSLSSSFRIATRL), are a transit peptide targeting the mitochondrion. At Thr330 the chain carries Phosphothreonine. Positions 629–655 (EQLYKNDSNNNNNNNNGNNAESDETKQ) are disordered. Over residues 637 to 647 (NNNNNNNNGNN) the composition is skewed to low complexity.

Belongs to the heat shock protein 70 family. In terms of assembly, component of the PAM complex, at least composed of SSC1 (mtHsp70), MGE1, TIM44, PAM16/TIM16, PAM17 and PAM18/TIM14. In the complex, SSC1 interacts directly with PAM18 and TIM44. Interacts with NAP1. Component of endonuclease SceI (endo.SceI), which is a heterodimer of ENS2 and SSC1.

It is found in the mitochondrion matrix. It carries out the reaction ATP + H2O = ADP + phosphate + H(+). Essential component of the PAM complex, a complex required for the translocation of transit peptide-containing proteins from the inner membrane into the mitochondrial matrix in an ATP-dependent manner. Constitutes the ATP-driven core of the motor and binds the precursor preprotein. Required for the import of the processed frataxin homolog YFH1 into the mitochondrion. In terms of biological role, acts as a non-catalytic component of endonuclease SceI (endo.SceI), which cleaves specifically at multiple sites on mitochondrial DNA and produces double-stranded breaks. SSC1 confers broader sequence specificity, greater stability, and higher activity on the catalytic subunit. This is Import motor subunit, mitochondrial from Saccharomyces cerevisiae (Baker's yeast).